The following is a 577-amino-acid chain: General transcription factor IIF subunit 1 (577 aa).

Positions 1 to 36 are disordered; the sequence is MSSASKSTPSAASGSSTSAAAAAAASVASGSASSSA. Residues Ser183, Ser246, Ser250, and Ser252 each carry the phosphoserine modification. Residues 236-508 form a disordered region; that stretch reads KITDMDEWID…TSLPTSFSGG (273 aa). Positions 240–256 are enriched in acidic residues; it reads MDEWIDSEDESDSEDEE. The segment covering 257 to 271 has biased composition (basic and acidic residues); it reads DKKKKEQEDSDDGKA. Residues 272–285 show a composition bias toward basic residues; sequence KGKGKKGADKKKKK. The segment covering 289-304 has biased composition (acidic residues); sequence DDEAFEESDDGDEEGR. The segment covering 319–341 has biased composition (basic and acidic residues); sequence PEAKVDKDMKGVAEEDALRKLLT. Thr341 carries the post-translational modification Phosphothreonine. 3 positions are modified to phosphoserine: Ser342, Ser352, and Ser355. Residues 362-376 are compositionally biased toward basic and acidic residues; it reads GEKKKKDKGKDEVSK. Positions 392-406 are enriched in low complexity; that stretch reads SNGSGDSSTDFSSDS. Positions 423 to 437 are enriched in basic and acidic residues; the sequence is VVKDKDKEKEKEKES. Residues 438 to 456 show a composition bias toward low complexity; sequence AASSKVIASSSNANKSRSA. Phosphoserine is present on residues Ser453 and Ser455. Thr457 is modified (phosphothreonine). Polar residues-rich tracts occupy residues 471–489 and 496–506; these read SLPSDLTASDTSNSPTSTP and EISTSLPTSFS. A phosphoserine mark is found at Ser482 and Ser484. Residue Thr488 is modified to Phosphothreonine.

This sequence belongs to the TFIIF alpha subunit family. In terms of assembly, heterodimer of an alpha and a beta subunit. In terms of processing, phosphorylated on Ser and other residues by TAF1 and casein kinase II-like kinases.

The protein localises to the nucleus. In terms of biological role, TFIIF is a general transcription initiation factor that binds to RNA polymerase II and helps to recruit it to the initiation complex in collaboration with TFIIB. It promotes transcription elongation. The protein is General transcription factor IIF subunit 1 of Drosophila melanogaster (Fruit fly).